Here is a 207-residue protein sequence, read N- to C-terminus: Large ribosomal subunit protein bL25 (207 aa).

It belongs to the bacterial ribosomal protein bL25 family. CTC subfamily. In terms of assembly, part of the 50S ribosomal subunit; part of the 5S rRNA/L5/L18/L25 subcomplex. Contacts the 5S rRNA. Binds to the 5S rRNA independently of L5 and L18.

Its function is as follows. This is one of the proteins that binds to the 5S RNA in the ribosome where it forms part of the central protuberance. The sequence is that of Large ribosomal subunit protein bL25 from Rhizorhabdus wittichii (strain DSM 6014 / CCUG 31198 / JCM 15750 / NBRC 105917 / EY 4224 / RW1) (Sphingomonas wittichii).